Consider the following 66-residue polypeptide: Large ribosomal subunit protein bL35 (66 aa).

The protein belongs to the bacterial ribosomal protein bL35 family.

The protein is Large ribosomal subunit protein bL35 of Afipia carboxidovorans (strain ATCC 49405 / DSM 1227 / KCTC 32145 / OM5) (Oligotropha carboxidovorans).